A 339-amino-acid chain; its full sequence is D-erythrose-4-phosphate dehydrogenase (339 aa).

11–12 is an NAD(+) binding site; that stretch reads RI. Substrate-binding positions include 153 to 155, Arg-199, 212 to 213, and Arg-235; these read SCT and TK. The Nucleophile role is filled by Cys-154. An NAD(+)-binding site is contributed by Asn-317.

It belongs to the glyceraldehyde-3-phosphate dehydrogenase family. Epd subfamily. Homotetramer.

The protein resides in the cytoplasm. It carries out the reaction D-erythrose 4-phosphate + NAD(+) + H2O = 4-phospho-D-erythronate + NADH + 2 H(+). It participates in cofactor biosynthesis; pyridoxine 5'-phosphate biosynthesis; pyridoxine 5'-phosphate from D-erythrose 4-phosphate: step 1/5. Catalyzes the NAD-dependent conversion of D-erythrose 4-phosphate to 4-phosphoerythronate. The protein is D-erythrose-4-phosphate dehydrogenase of Shewanella frigidimarina (strain NCIMB 400).